A 354-amino-acid chain; its full sequence is MALITLRQLLDHAAEQGYGVPAFNINNMEQGLAIMEAARACDAPVIIQASRGARSYANDIMLAKMIEALAAIYPEIPLCMHQDHGNNEATCMTAIRHGFTSVMMDGSLKADAKTPADYDYNVDITARVSHMAHWVGASVEGELGVLGSLETGESEAEDGHGAEGKLDHSQLLTDPDQAVDFVKKTQVDALAIACGTSHGAYKFSRKPDGEILAMSVIEAIHKKLPDTHLVMHGSSSVPQELQDIINAFGGAMPQTFGVPVEEIVRGIKMGVRKVNIDTDCRMAMTGQFRRIAQQTPSEFDPRKFLKPAMDAMRDLCKQRLEAFGTAGQAGKIRIIPMDDMAKRYASGALAPKTA.

Residue Ser50 participates in D-glyceraldehyde 3-phosphate binding. The active-site Proton donor is the Asp83. Positions 84, 105, 142, and 198 each coordinate Zn(2+). Gly199 serves as a coordination point for dihydroxyacetone phosphate. A Zn(2+)-binding site is contributed by His232. Dihydroxyacetone phosphate is bound by residues 233–235 and 275–278; these read GSS and NIDT.

This sequence belongs to the class II fructose-bisphosphate aldolase family. As to quaternary structure, homodimer. The cofactor is Zn(2+).

It carries out the reaction beta-D-fructose 1,6-bisphosphate = D-glyceraldehyde 3-phosphate + dihydroxyacetone phosphate. It functions in the pathway carbohydrate biosynthesis; Calvin cycle. Its pathway is carbohydrate degradation; glycolysis; D-glyceraldehyde 3-phosphate and glycerone phosphate from D-glucose: step 4/4. Functionally, catalyzes the aldol condensation of dihydroxyacetone phosphate (DHAP or glycerone-phosphate) with glyceraldehyde 3-phosphate (G3P) to form fructose 1,6-bisphosphate (FBP) in gluconeogenesis and the reverse reaction in glycolysis. This chain is Fructose-bisphosphate aldolase 2 (cfxB), found in Cereibacter sphaeroides (Rhodobacter sphaeroides).